A 371-amino-acid chain; its full sequence is SufE-like protein 1, chloroplastic/mitochondrial (371 aa).

A chloroplast and mitochondrion-targeting transit peptide spans 1 to 66 (MAAAMSSSCC…ISTGIVPPPS (66 aa)). The Cysteine persulfide intermediate role is filled by Cys131. At Cys131 the chain carries S-glutathionyl cysteine. The tract at residues 218–249 (VKGEEDSSSGESSESSFVSIPETKDEANVPEV) is disordered.

It belongs to the SufE family. Heterotetramer with NFS2. Interacts with NFS2 and NIFS1. Interacts in vitro with GRXS14, GRXS15, GRXS16 and GRXS17, but not with GRXC5. Interacts in vivo only with GRXS14 and GRXS16. In terms of processing, glutathionylated. Glutathionylation strongly reduces the stimulation of NFS2 activity. In terms of tissue distribution, expressed in roots, leaves, stems and flowers.

The protein resides in the plastid. It is found in the chloroplast stroma. It localises to the mitochondrion. It participates in cofactor biosynthesis; iron-sulfur cluster biosynthesis. Functionally, participates in cysteine desulfurization mediated by NFS2 in chloroplast and NIFS1 in mitochondrion. Activates the cysteine desulfurase activity of NFS2. Cysteine desulfurization mobilizes sulfur from L-cysteine to yield L-alanine and supplies the inorganic sulfur for iron-sulfur (Fe-S) cluster formation. Glutaredoxins regulate SUFE1 activity by inducing its reduction and deglutathionylation. This chain is SufE-like protein 1, chloroplastic/mitochondrial, found in Arabidopsis thaliana (Mouse-ear cress).